The sequence spans 259 residues: Protein GrpE (259 aa).

Disordered stretches follow at residues 1–74 (MNSD…IKGS) and 228–259 (PGPKVINEEIPDQSASNQELSESVDGSTKDEN). Over residues 17–40 (SSQNNPSENSVSSPNSNESVNQVE) the composition is skewed to low complexity. Composition is skewed to polar residues over residues 56–73 (VDTANEQSSTSCESNIKG) and 240–253 (QSASNQELSESVDG).

Belongs to the GrpE family. As to quaternary structure, homodimer.

Its subcellular location is the cytoplasm. Functionally, participates actively in the response to hyperosmotic and heat shock by preventing the aggregation of stress-denatured proteins, in association with DnaK and GrpE. It is the nucleotide exchange factor for DnaK and may function as a thermosensor. Unfolded proteins bind initially to DnaJ; upon interaction with the DnaJ-bound protein, DnaK hydrolyzes its bound ATP, resulting in the formation of a stable complex. GrpE releases ADP from DnaK; ATP binding to DnaK triggers the release of the substrate protein, thus completing the reaction cycle. Several rounds of ATP-dependent interactions between DnaJ, DnaK and GrpE are required for fully efficient folding. This is Protein GrpE from Prochlorococcus marinus (strain NATL2A).